The primary structure comprises 294 residues: tRNA dimethylallyltransferase (294 aa).

Position 10-17 (10-17 (GPTAVGKT)) interacts with ATP. Substrate is bound at residue 12–17 (TAVGKT). The interval 35 to 38 (DSQQ) is interaction with substrate tRNA.

The protein belongs to the IPP transferase family. As to quaternary structure, monomer. Mg(2+) is required as a cofactor.

The enzyme catalyses adenosine(37) in tRNA + dimethylallyl diphosphate = N(6)-dimethylallyladenosine(37) in tRNA + diphosphate. Functionally, catalyzes the transfer of a dimethylallyl group onto the adenine at position 37 in tRNAs that read codons beginning with uridine, leading to the formation of N6-(dimethylallyl)adenosine (i(6)A). The chain is tRNA dimethylallyltransferase from Streptococcus pneumoniae serotype 19F (strain G54).